A 158-amino-acid polypeptide reads, in one-letter code: NAD(P)H-quinone oxidoreductase subunit J, chloroplastic (158 aa).

It belongs to the complex I 30 kDa subunit family. In terms of assembly, NDH is composed of at least 16 different subunits, 5 of which are encoded in the nucleus.

It localises to the plastid. The protein resides in the chloroplast thylakoid membrane. The enzyme catalyses a plastoquinone + NADH + (n+1) H(+)(in) = a plastoquinol + NAD(+) + n H(+)(out). It carries out the reaction a plastoquinone + NADPH + (n+1) H(+)(in) = a plastoquinol + NADP(+) + n H(+)(out). Its function is as follows. NDH shuttles electrons from NAD(P)H:plastoquinone, via FMN and iron-sulfur (Fe-S) centers, to quinones in the photosynthetic chain and possibly in a chloroplast respiratory chain. The immediate electron acceptor for the enzyme in this species is believed to be plastoquinone. Couples the redox reaction to proton translocation, and thus conserves the redox energy in a proton gradient. This chain is NAD(P)H-quinone oxidoreductase subunit J, chloroplastic, found in Olimarabidopsis pumila (Dwarf rocket).